The chain runs to 353 residues: Tectonin-2 (353 aa).

In terms of domain architecture, Ricin B-type lectin spans 44 to 93 (WIFDNDGYIRLAANHNLVLDVNGGAAKEGNTVLSYPDKKDHAKNQLWVNK). A run of 6 repeats spans residues 138–173 (SAWERHEGELNVVAVGAGNHDVWGVNHLEHIYHWDG), 174–210 (SKWHQIEGAATNISVGLDGTVWCVNKAHEIYRLDRGT), 211–247 (NKWSIVPGELVQVSVGNSHNIWGVNHLDAIYKWNADS), 248–282 (NSWTFVDGQLTNVSVGHDGTVYGVNRAGNIYHYNG), 283–318 (NSWDAVSGELVQIHVANKDLIVGVNKAGHVYRLKHG), and 319–353 (KDWEKLEGELSWVAVGHGGELWGANSAHNIYKALL). The segment at 138 to 353 (SAWERHEGEL…SAHNIYKALL (216 aa)) is 6 X approximate tandem repeats.

The protein belongs to the tectonin family.

It localises to the cell surface. The protein localises to the cytoplasmic vesicle membrane. Its function is as follows. Probably involved in bacterial recognition. May be a lectin that function as part of a transmembrane signaling complex during phagocytosis. This Physarum polycephalum (Slime mold) protein is Tectonin-2 (TECB).